A 1501-amino-acid chain; its full sequence is Multidrug resistance protein CDR1 (1501 aa).

Residues M1–N30 form a disordered region. Topologically, residues M1–S513 are cytoplasmic. Residues S8 to I18 show a composition bias toward basic and acidic residues. An ABC transporter 1 domain is found at L150–Q404. Residues I514–Y534 traverse the membrane as a helical segment. Residue N535 is glycosylated (N-linked (GlcNAc...) asparagine). The next 4 helical transmembrane spans lie at A549 to F569, L598 to F618, G623 to F643, and G655 to I675. A glycan (N-linked (GlcNAc...) asparagine) is linked at N724. A helical membrane pass occupies residues L765 to F785. Topologically, residues N786–G1195 are cytoplasmic. The ABC transporter 2 domain maps to F859 to A1103. Residue G895 to T902 coordinates ATP. 6 helical membrane passes run Y1196–F1216, F1230–F1250, I1281–L1301, G1315–L1335, M1356–F1376, and F1467–L1487.

The protein belongs to the ABC transporter superfamily. ABCG family. PDR (TC 3.A.1.205) subfamily.

The protein resides in the membrane. In terms of biological role, transporter, whose physiological function is not yet established. Confers resistance to the chemical cycloheximide. This chain is Multidrug resistance protein CDR1 (CDR1), found in Candida albicans (Yeast).